The following is a 364-amino-acid chain: Coproporphyrin III ferrochelatase (364 aa).

Positions 29 and 118 each coordinate Fe-coproporphyrin III. Fe(2+)-binding residues include His169 and Glu250.

It belongs to the ferrochelatase family.

Its subcellular location is the cytoplasm. It carries out the reaction Fe-coproporphyrin III + 2 H(+) = coproporphyrin III + Fe(2+). It participates in porphyrin-containing compound metabolism; protoheme biosynthesis. Functionally, involved in coproporphyrin-dependent heme b biosynthesis. Catalyzes the insertion of ferrous iron into coproporphyrin III to form Fe-coproporphyrin III. This chain is Coproporphyrin III ferrochelatase, found in Streptococcus pneumoniae (strain Taiwan19F-14).